The chain runs to 84 residues: Defensin-like protein 116 (84 aa).

A signal peptide spans 1–24 (MAITKNMLVVLLLTIIFVTSSVHC). 4 disulfide bridges follow: C40/C80, C46/C71, C55/C78, and C59/C79.

Belongs to the DEFL family.

It localises to the secreted. This Arabidopsis thaliana (Mouse-ear cress) protein is Defensin-like protein 116.